Consider the following 352-residue polypeptide: Photosystem II D2 protein (352 aa).

Threonine 2 carries the N-acetylthreonine modification. Threonine 2 bears the Phosphothreonine mark. The chain crosses the membrane as a helical span at residues 40-60; sequence CAYFALGGWLTGTTFVTSWYT. Histidine 117 contacts chlorophyll a. A helical membrane pass occupies residues 124–140; that stretch reads GFMLRQFEIARAVKIRP. The pheophytin a site is built by glutamine 129 and asparagine 142. Residues 152-165 traverse the membrane as a helical segment; sequence VFVSVFLIYPLGQA. A chlorophyll a-binding site is contributed by histidine 197. Residues 207–227 traverse the membrane as a helical segment; it reads AALLCAIHGATVENTLFEDGD. A plastoquinone is bound by residues histidine 214 and phenylalanine 261. Histidine 214 is a Fe cation binding site. Histidine 268 provides a ligand contact to Fe cation. The chain crosses the membrane as a helical span at residues 278-294; that stretch reads GLWMSALGVVGLALNLR.

This sequence belongs to the reaction center PufL/M/PsbA/D family. PSII is composed of 1 copy each of membrane proteins PsbA, PsbB, PsbC, PsbD, PsbE, PsbF, PsbH, PsbI, PsbJ, PsbK, PsbL, PsbM, PsbT, PsbX, PsbY, PsbZ, Psb30/Ycf12, at least 3 peripheral proteins of the oxygen-evolving complex and a large number of cofactors. It forms dimeric complexes. The D1/D2 heterodimer binds P680, chlorophylls that are the primary electron donor of PSII, and subsequent electron acceptors. It shares a non-heme iron and each subunit binds pheophytin, quinone, additional chlorophylls, carotenoids and lipids. There is also a Cl(-1) ion associated with D1 and D2, which is required for oxygen evolution. The PSII complex binds additional chlorophylls, carotenoids and specific lipids. is required as a cofactor.

It is found in the plastid. Its subcellular location is the chloroplast thylakoid membrane. The enzyme catalyses 2 a plastoquinone + 4 hnu + 2 H2O = 2 a plastoquinol + O2. Its function is as follows. Photosystem II (PSII) is a light-driven water:plastoquinone oxidoreductase that uses light energy to abstract electrons from H(2)O, generating O(2) and a proton gradient subsequently used for ATP formation. It consists of a core antenna complex that captures photons, and an electron transfer chain that converts photonic excitation into a charge separation. The D1/D2 (PsbA/PsbD) reaction center heterodimer binds P680, the primary electron donor of PSII as well as several subsequent electron acceptors. D2 is needed for assembly of a stable PSII complex. The polypeptide is Photosystem II D2 protein (Tupiella akineta (Green alga)).